Reading from the N-terminus, the 115-residue chain is MKVAVIILSILVLAAASESIEEYREDFSRPNAMERSANDWIPTAPSAVERSADFAVEELERATCAGQDKPCKETCDCCGERGECVCALSYEGKYRCICRQGYVWIAWYKLASCKK.

An N-terminal signal peptide occupies residues 1-17 (MKVAVIILSILVLAAAS). The propeptide occupies 18–61 (ESIEEYREDFSRPNAMERSANDWIPTAPSAVERSADFAVEELER). Intrachain disulfides connect Cys-64-Cys-78, Cys-71-Cys-84, Cys-75-Cys-113, Cys-77-Cys-98, and Cys-86-Cys-96. Lys-115 is a propeptide.

The protein belongs to the neurotoxin 03 (Tx2) family. 04 subfamily. As to expression, expressed by the venom gland.

It localises to the secreted. Its function is as follows. Blocks voltage-gated sodium channels (Nav). This is U2-ctenitoxin-Pn1b from Phoneutria nigriventer (Brazilian armed spider).